The following is a 238-amino-acid chain: Large ribosomal subunit protein uL3 (238 aa).

Disordered stretches follow at residues 140 to 164 and 212 to 238; these read SHRSIGSTGGRQDPGKTWKNKKMPG and LPKEAPKPGKFKVAGGEAEAAAQQEGA. The residue at position 151 (Gln-151) is an N5-methylglutamine. Low complexity predominate over residues 225–238; that stretch reads AGGEAEAAAQQEGA.

It belongs to the universal ribosomal protein uL3 family. Part of the 50S ribosomal subunit. Forms a cluster with proteins L14 and L19. Methylated by PrmB.

Functionally, one of the primary rRNA binding proteins, it binds directly near the 3'-end of the 23S rRNA, where it nucleates assembly of the 50S subunit. In Bradyrhizobium diazoefficiens (strain JCM 10833 / BCRC 13528 / IAM 13628 / NBRC 14792 / USDA 110), this protein is Large ribosomal subunit protein uL3.